The primary structure comprises 206 residues: Ubiquitin-conjugating enzyme E2 S (206 aa).

In terms of domain architecture, UBC core spans 14 to 160; sequence QTIRQVMKEL…ARMMTEIHAQ (147 aa). The Glycyl thioester intermediate role is filled by Cys98. Residues 165-191 are disordered; sequence GVSDAKDDDGPSNKKHAGLDKKLQDKK. Residues 168 to 191 show a composition bias toward basic and acidic residues; that stretch reads DAKDDDGPSNKKHAGLDKKLQDKK.

It belongs to the ubiquitin-conjugating enzyme family.

The catalysed reaction is S-ubiquitinyl-[E1 ubiquitin-activating enzyme]-L-cysteine + [E2 ubiquitin-conjugating enzyme]-L-cysteine = [E1 ubiquitin-activating enzyme]-L-cysteine + S-ubiquitinyl-[E2 ubiquitin-conjugating enzyme]-L-cysteine.. The protein operates within protein modification; protein ubiquitination. Its function is as follows. Catalyzes the covalent attachment of ubiquitin to other proteins. Acts as an essential factor of the anaphase promoting complex/cyclosome (APC/C), a cell cycle-regulated ubiquitin ligase that controls progression through mitosis. Acts by specifically elongating polyubiquitin chains initiated by the E2 enzyme vih/UbcH10 on APC/C substrates, enhancing the degradation of APC/C substrates by the proteasome and promoting mitotic exit. The polypeptide is Ubiquitin-conjugating enzyme E2 S (Drosophila mojavensis (Fruit fly)).